The following is a 196-amino-acid chain: MSPQIDAVILAGGMARRMGGNDKGLVELNDQPMIKHAIDRIKPQVKQILINANRNQNRYAEFGYPVLSDEDSGYLGPLAGMITAMGQTQADYLLVVPCDCPLLPTDLVQRMLAAITAEDAEMAVASDGKREQPVVLLMKPALRGSMKAFLDAGERKIDFWYAKHHCVVCDFSDQPNAFVNVNTPEQKQQLSEAIAH.

Residues 10-12 (LAG), lysine 23, asparagine 51, aspartate 69, and aspartate 99 each bind GTP. Aspartate 99 is a Mg(2+) binding site.

This sequence belongs to the MobA family. As to quaternary structure, monomer. The cofactor is Mg(2+).

Its subcellular location is the cytoplasm. The enzyme catalyses Mo-molybdopterin + GTP + H(+) = Mo-molybdopterin guanine dinucleotide + diphosphate. In terms of biological role, transfers a GMP moiety from GTP to Mo-molybdopterin (Mo-MPT) cofactor (Moco or molybdenum cofactor) to form Mo-molybdopterin guanine dinucleotide (Mo-MGD) cofactor. The protein is Molybdenum cofactor guanylyltransferase of Shewanella loihica (strain ATCC BAA-1088 / PV-4).